The chain runs to 309 residues: MIKNKILTATLAVGLIAPLANPFIEISKAENKIEDIGQGAEIIKRTQDITSKRLAITQNIQFDFVKDKKYNKDALVVKMQGFISSRTTYSDLKKYPYIKRMIWPFQYNISLKTKDSNVDLINYLPKNKIDSADVSQKLGYNIGGNFQSAPSIGGSGSFNYSKTISYNQKNYVTEVESQNSKGVKWGVKANSFVTPNGQVSAYDQYLFAQDPTGPAARDYFVPDNQLPPLIQSGFNPSFITTLSHEKGKGDKSEFEITYGRNMDTTYAYVTRHRLAVDRKHDAFKNRNVTVKYEVNWKTHEVKIKSITPK.

A signal peptide spans 1 to 29 (MIKNKILTATLAVGLIAPLANPFIEISKA).

It belongs to the aerolysin family. Toxicity requires sequential binding and synergistic association of a class S and a class F component which form heterooligomeric complexes. HlgA (class S) associates with HlgB (class F) thus forming an AB toxin in strains producing both gamma-hemolysins and leukocidins. HlgA and LukF-PV can also form a complex.

It is found in the secreted. Its function is as follows. Toxin that seems to act by forming pores in the membrane of the cell. Has a hemolytic and a leucotoxic activity. The protein is Gamma-hemolysin component A (hlgA) of Staphylococcus aureus (strain MRSA252).